The chain runs to 262 residues: Acyl-[acyl-carrier-protein]--UDP-N-acetylglucosamine O-acyltransferase (262 aa).

Belongs to the transferase hexapeptide repeat family. LpxA subfamily. Homotrimer.

It localises to the cytoplasm. The enzyme catalyses a (3R)-hydroxyacyl-[ACP] + UDP-N-acetyl-alpha-D-glucosamine = a UDP-3-O-[(3R)-3-hydroxyacyl]-N-acetyl-alpha-D-glucosamine + holo-[ACP]. Its pathway is glycolipid biosynthesis; lipid IV(A) biosynthesis; lipid IV(A) from (3R)-3-hydroxytetradecanoyl-[acyl-carrier-protein] and UDP-N-acetyl-alpha-D-glucosamine: step 1/6. Functionally, involved in the biosynthesis of lipid A, a phosphorylated glycolipid that anchors the lipopolysaccharide to the outer membrane of the cell. The protein is Acyl-[acyl-carrier-protein]--UDP-N-acetylglucosamine O-acyltransferase of Burkholderia multivorans (strain ATCC 17616 / 249).